A 303-amino-acid chain; its full sequence is Hydroxyacylglutathione hydrolase, mitochondrial (303 aa).

Zn(2+)-binding residues include histidine 97, histidine 99, aspartate 101, histidine 102, histidine 153, and aspartate 177. Substrate-binding positions include 186 to 188 (KFF), 216 to 218 (HEY), and 292 to 295 (RKEK). Histidine 216 contributes to the Zn(2+) binding site.

Belongs to the metallo-beta-lactamase superfamily. Glyoxalase II family. Monomer. Zn(2+) is required as a cofactor.

It localises to the mitochondrion matrix. Its subcellular location is the cytoplasm. It catalyses the reaction an S-(2-hydroxyacyl)glutathione + H2O = a 2-hydroxy carboxylate + glutathione + H(+). The catalysed reaction is (R)-S-lactoylglutathione + H2O = (R)-lactate + glutathione + H(+). Thiolesterase that catalyzes the hydrolysis of S-D-lactoyl-glutathione to form glutathione and D-lactic acid. In Danio rerio (Zebrafish), this protein is Hydroxyacylglutathione hydrolase, mitochondrial (hagh).